The sequence spans 221 residues: MNNAEILKHVDHTLLKPVATWDDIKKICDESIEYNTASICIPACYISRIHATYGDKVNICTVVGFPLGYSSTEGKIAETKQALADGANEIDMVINISDVKNKAYDKVTEEIRALKEVVGNKILKVIIETCYLTEEEKIAMCKAVTEAGADYIKTSTGFGTGGATLEDIKLFKKHIGPNVKIKAAGGVSTVEDLNMFINEGCDRLGTSRAVGLLKGEETQGY.

Catalysis depends on D91, which acts as the Proton donor/acceptor. Residue K153 is the Schiff-base intermediate with acetaldehyde of the active site. K182 serves as the catalytic Proton donor/acceptor.

This sequence belongs to the DeoC/FbaB aldolase family. DeoC type 1 subfamily.

Its subcellular location is the cytoplasm. It catalyses the reaction 2-deoxy-D-ribose 5-phosphate = D-glyceraldehyde 3-phosphate + acetaldehyde. The protein operates within carbohydrate degradation; 2-deoxy-D-ribose 1-phosphate degradation; D-glyceraldehyde 3-phosphate and acetaldehyde from 2-deoxy-alpha-D-ribose 1-phosphate: step 2/2. In terms of biological role, catalyzes a reversible aldol reaction between acetaldehyde and D-glyceraldehyde 3-phosphate to generate 2-deoxy-D-ribose 5-phosphate. This Clostridium botulinum (strain Eklund 17B / Type B) protein is Deoxyribose-phosphate aldolase.